The chain runs to 502 residues: Maturase K (502 aa).

Belongs to the intron maturase 2 family. MatK subfamily.

Its subcellular location is the plastid. The protein resides in the chloroplast. Functionally, usually encoded in the trnK tRNA gene intron. Probably assists in splicing its own and other chloroplast group II introns. This is Maturase K from Tilia americana (American basswood).